Here is a 174-residue protein sequence, read N- to C-terminus: ATP synthase subunit delta (174 aa).

The protein belongs to the ATPase delta chain family. As to quaternary structure, F-type ATPases have 2 components, F(1) - the catalytic core - and F(0) - the membrane proton channel. F(1) has five subunits: alpha(3), beta(3), gamma(1), delta(1), epsilon(1). F(0) has three main subunits: a(1), b(2) and c(10-14). The alpha and beta chains form an alternating ring which encloses part of the gamma chain. F(1) is attached to F(0) by a central stalk formed by the gamma and epsilon chains, while a peripheral stalk is formed by the delta and b chains.

The protein resides in the cell inner membrane. Functionally, f(1)F(0) ATP synthase produces ATP from ADP in the presence of a proton or sodium gradient. F-type ATPases consist of two structural domains, F(1) containing the extramembraneous catalytic core and F(0) containing the membrane proton channel, linked together by a central stalk and a peripheral stalk. During catalysis, ATP synthesis in the catalytic domain of F(1) is coupled via a rotary mechanism of the central stalk subunits to proton translocation. This protein is part of the stalk that links CF(0) to CF(1). It either transmits conformational changes from CF(0) to CF(1) or is implicated in proton conduction. The polypeptide is ATP synthase subunit delta (Fusobacterium nucleatum subsp. nucleatum (strain ATCC 25586 / DSM 15643 / BCRC 10681 / CIP 101130 / JCM 8532 / KCTC 2640 / LMG 13131 / VPI 4355)).